The chain runs to 48 residues: MLENNVFRLMILMGGVIALIAIITICSDGIPEVEDVFQHFISHKNTKY.

An N-terminal signal peptide occupies residues 1 to 21 (MLENNVFRLMILMGGVIALIA).

This is an uncharacterized protein from Bacillus anthracis.